The sequence spans 1133 residues: Envelopment polyprotein (1133 aa).

Positions 1–16 (MWSLLLLAALVGQGFA) are cleaved as a signal peptide. Residues 17 to 484 (LKNVFDMRIQ…PGFHGWATAA (468 aa)) are Lumenal-facing. Cystine bridges form between Cys61–Cys155, Cys107–Cys126, Cys131–Cys136, Cys173–Cys183, Cys208–Cys245, Cys232–Cys349, Cys374–Cys433, Cys378–Cys387, Cys403–Cys422, and Cys450–Cys473. Asn132 carries N-linked (GlcNAc...) asparagine; by host glycosylation. Asn233 and Asn345 each carry an N-linked (GlcNAc...) asparagine; by host glycan. N-linked (GlcNAc...) asparagine; by host glycosylation occurs at Asn397. The helical transmembrane segment at 485–504 (LLITFCFGWVLIPACTLAIL) threads the bilayer. Residues 505–626 (LVLKFFANIL…NLFRYKSRCY (122 aa)) are Cytoplasmic-facing. The segment at 514–531 (LHTSNQENRFKAILRKIK) is binding to the ribonucleoprotein. 2 CCHC-type zinc fingers span residues 543-563 (CEIC…NLSC) and 568-589 (CPYC…YKVC). Binding to the ribonucleoprotein regions lie at residues 586–603 (YKVC…KKTV), 590–601 (QATHRFREDLKK), and 609–623 (GPGC…RYKS). The region spanning 609–632 (GPGCYRTLNLFRYKSRCYILTMWT) is the ITAM domain. Positions 613–616 (YRTL) match the YxxL motif. The helical transmembrane segment at 627–647 (ILTMWTLLLIIESILWAASAA) threads the bilayer. Residues 648 to 1105 (EIPLVPLWTD…VMGIINGNWV (458 aa)) are Lumenal-facing. 8 disulfides stabilise this stretch: Cys733–Cys768, Cys737–Cys775, Cys749–Cys883, Cys763–Cys894, Cys778–Cys902, Cys804–Cys813, Cys821–Cys830, and Cys861–Cys865. Residues 755–775 (YEYENSWACNPPDCPGVGTGC) are fusion loop. Asn926 carries an N-linked (GlcNAc...) asparagine; by host glycan. Cystine bridges form between Cys968–Cys998, Cys991–Cys1043, Cys1008–Cys1013, Cys1044–Cys1049, and Cys1083–Cys1087. The helical transmembrane segment at 1106–1125 (VLIVLCVLLLFSLILLSILC) threads the bilayer. Residues 1120–1133 (LLSILCPVRKHKKS) form a binding to the ribonucleoprotein region. Over 1126–1133 (PVRKHKKS) the chain is Cytoplasmic.

The protein belongs to the hantavirus envelope glycoprotein family. As to quaternary structure, homodimer. Homotetramer; forms heterotetrameric Gn-Gc spikes in the pre-fusion conformation. Interacts (via C-terminus) with the nucleoprotein. Interacts with host TUFM; this interaction contributes to the virus-induced degradation of mitochondria by autophagy, which leads to degradation of host MAVS and inhibition of type I interferon (IFN) responses. Interacts with host MAP1LC3B; this interaction contributes to the virus-induced degradation of mitochondria by autophagy, which leads to degradation of host MAVS and inhibition of type I interferon (IFN) responses. Homodimer. Homotetramer; forms heterotetrameric Gn-Gc spikes in the pre-fusion conformation. Homotrimer; forms homotrimer in the post-fusion conformation at acidic pH. Interacts (via C-terminus) with the nucleoprotein. In terms of processing, envelope polyprotein precursor is quickly cleaved in vivo just after synthesis, presumably by host signal peptidase.

Its subcellular location is the virion membrane. The protein resides in the host cell surface. It is found in the host Golgi apparatus membrane. The protein localises to the host endoplasmic reticulum membrane. It localises to the host mitochondrion. Forms homotetramers with glycoprotein C at the surface of the virion. Attaches the virion to host cell receptors including integrin ITGAV/ITGB3. This attachment induces virion internalization predominantly through clathrin-dependent endocytosis. Mediates the assembly and budding of infectious virus particles through its interaction with the nucleocapsid protein and the viral genome. May dysregulate normal immune and endothelial cell responses through an ITAM motif. Translocates to mitochondria, binds to host TUFM and recruits MAP1LC3B. These interactions induce mitochondrial autophagy and therefore destruction of host MAVS leading to inhibition of type I interferon (IFN) responses. Concomitant breakdown of glycoprotein N is apparently prevented by the nucleoprotein that may inhibit Gn-stimulated autophagosome-lysosome fusion. Interacts with the viral genomic RNA. Functionally, forms homotetramers with glycoprotein N at the surface of the virion. Attaches the virion to host cell receptors including integrin ITGAV/ITGB3. This attachment induces virion internalization predominantly through clathrin-dependent endocytosis. Class II fusion protein that promotes fusion of viral membrane with host endosomal membrane after endocytosis of the virion. The protein is Envelopment polyprotein (GP) of Homo sapiens (Human).